We begin with the raw amino-acid sequence, 138 residues long: Large ribosomal subunit protein uL16 (138 aa).

A compositionally biased stretch (basic residues) spans 1-13; it reads MLQPKRRKYRKEQ. The disordered stretch occupies residues 1 to 20; sequence MLQPKRRKYRKEQKGRNTGI.

This sequence belongs to the universal ribosomal protein uL16 family. As to quaternary structure, part of the 50S ribosomal subunit.

In terms of biological role, binds 23S rRNA and is also seen to make contacts with the A and possibly P site tRNAs. The protein is Large ribosomal subunit protein uL16 of Ralstonia nicotianae (strain ATCC BAA-1114 / GMI1000) (Ralstonia solanacearum).